Reading from the N-terminus, the 232-residue chain is Lipoprotein-releasing system ATP-binding protein LolD (232 aa).

Positions 6 to 231 constitute an ABC transporter domain; sequence ISCENLNKVY…KLTIKESQHV (226 aa). Position 42–49 (42–49) interacts with ATP; sequence GSSGSGKS.

The protein belongs to the ABC transporter superfamily. Lipoprotein translocase (TC 3.A.1.125) family. In terms of assembly, the complex is composed of two ATP-binding proteins (LolD) and two transmembrane proteins (LolC and LolE).

The protein resides in the cell inner membrane. Its function is as follows. Part of the ABC transporter complex LolCDE involved in the translocation of mature outer membrane-directed lipoproteins, from the inner membrane to the periplasmic chaperone, LolA. Responsible for the formation of the LolA-lipoprotein complex in an ATP-dependent manner. The protein is Lipoprotein-releasing system ATP-binding protein LolD of Pseudoalteromonas translucida (strain TAC 125).